Here is a 431-residue protein sequence, read N- to C-terminus: Enolase (431 aa).

Gln-164 is a binding site for (2R)-2-phosphoglycerate. The active-site Proton donor is Glu-206. Positions 243, 288, and 315 each coordinate Mg(2+). 4 residues coordinate (2R)-2-phosphoglycerate: Lys-340, Arg-369, Ser-370, and Lys-391. Lys-340 serves as the catalytic Proton acceptor.

The protein belongs to the enolase family. Requires Mg(2+) as cofactor.

It is found in the cytoplasm. The protein resides in the secreted. It localises to the cell surface. It carries out the reaction (2R)-2-phosphoglycerate = phosphoenolpyruvate + H2O. The protein operates within carbohydrate degradation; glycolysis; pyruvate from D-glyceraldehyde 3-phosphate: step 4/5. Its function is as follows. Catalyzes the reversible conversion of 2-phosphoglycerate (2-PG) into phosphoenolpyruvate (PEP). It is essential for the degradation of carbohydrates via glycolysis. This chain is Enolase, found in Fervidobacterium nodosum (strain ATCC 35602 / DSM 5306 / Rt17-B1).